The chain runs to 121 residues: NADH-ubiquinone oxidoreductase chain 3 (121 aa).

Helical transmembrane passes span Ile-11–Phe-31, Phe-63–Trp-83, and Ile-90–Ile-110.

Belongs to the complex I subunit 3 family.

It localises to the mitochondrion membrane. It catalyses the reaction a ubiquinone + NADH + 5 H(+)(in) = a ubiquinol + NAD(+) + 4 H(+)(out). Core subunit of the mitochondrial membrane respiratory chain NADH dehydrogenase (Complex I) that is believed to belong to the minimal assembly required for catalysis. Complex I functions in the transfer of electrons from NADH to the respiratory chain. The immediate electron acceptor for the enzyme is believed to be ubiquinone. This Chondrus crispus (Carrageen Irish moss) protein is NADH-ubiquinone oxidoreductase chain 3 (ND3).